A 424-amino-acid polypeptide reads, in one-letter code: MIVSEVNFDGLIGPTHNYAGLSRGNVASALHAGQPSYPRQAALQGLEKMKHLMDMGLTQGVFLPPLRPVTHLLHHLGYKGDDKTILKQAAKDDRLLFNNLCSASSMWAANAATVISEFDSHDGRVHFITANLATMLHRHLEAQTTYAQLNQIFSNSCFFAMHHPLPCGQHFSDEGAANHMRITSAHGRTGINIFVYGEKNDIYPARQKLRASQAVARLGEVKPDLAWFIPQKKEAIAKGAFHNDVVAVANEYVLLAHAEAFEDQGEWIKRIAEKIDGFIPIIIDNITLEQAVKSYLFNSQIVTLKDRTMALILPQEVKSDPAVWETVNRIISGNNPIKKAVVVDVRESMANGGGPACLRLRVPLSKAALEAVDQRFILTPKRWEKLYQLVENFWPEKITPDDLVLPELWKTAVRAHWALTSWLG.

Residues 19 to 28 (AGLSRGNVAS), asparagine 110, and 137 to 138 (HR) each bind substrate. The active site involves glutamate 174. Arginine 206 lines the substrate pocket. Histidine 242 is an active-site residue. 2 residues coordinate substrate: aspartate 244 and asparagine 351. Cysteine 357 acts as the Nucleophile in catalysis.

This sequence belongs to the succinylarginine dihydrolase family. In terms of assembly, homodimer.

The enzyme catalyses N(2)-succinyl-L-arginine + 2 H2O + 2 H(+) = N(2)-succinyl-L-ornithine + 2 NH4(+) + CO2. The protein operates within amino-acid degradation; L-arginine degradation via AST pathway; L-glutamate and succinate from L-arginine: step 2/5. Its function is as follows. Catalyzes the hydrolysis of N(2)-succinylarginine into N(2)-succinylornithine, ammonia and CO(2). This is N-succinylarginine dihydrolase from Zymomonas mobilis subsp. mobilis (strain ATCC 31821 / ZM4 / CP4).